An 82-amino-acid polypeptide reads, in one-letter code: Escargot/snail protein homolog (82 aa).

4 C2H2-type zinc fingers span residues 1-5 (HQQFH), 18-40 (FSCKNCDKTYVSLGALKMHIRTH), 44-66 (CKCPICGKAFSRPWLLQGHIRTH), and 72-82 (FSCQHCQSAFV).

This sequence belongs to the snail C2H2-type zinc-finger protein family.

Its subcellular location is the nucleus. This is Escargot/snail protein homolog from Calliphora vicina (Blue blowfly).